The chain runs to 110 residues: Large ribosomal subunit protein uL22 (110 aa).

The protein belongs to the universal ribosomal protein uL22 family. As to quaternary structure, part of the 50S ribosomal subunit.

In terms of biological role, this protein binds specifically to 23S rRNA; its binding is stimulated by other ribosomal proteins, e.g. L4, L17, and L20. It is important during the early stages of 50S assembly. It makes multiple contacts with different domains of the 23S rRNA in the assembled 50S subunit and ribosome. Functionally, the globular domain of the protein is located near the polypeptide exit tunnel on the outside of the subunit, while an extended beta-hairpin is found that lines the wall of the exit tunnel in the center of the 70S ribosome. In Acinetobacter baumannii (strain ACICU), this protein is Large ribosomal subunit protein uL22.